The primary structure comprises 544 residues: Glucose-6-phosphate isomerase (544 aa).

The active-site Proton donor is the glutamate 354. Active-site residues include histidine 385 and lysine 510.

This sequence belongs to the GPI family.

The protein localises to the cytoplasm. It catalyses the reaction alpha-D-glucose 6-phosphate = beta-D-fructose 6-phosphate. It functions in the pathway carbohydrate biosynthesis; gluconeogenesis. It participates in carbohydrate degradation; glycolysis; D-glyceraldehyde 3-phosphate and glycerone phosphate from D-glucose: step 2/4. In terms of biological role, catalyzes the reversible isomerization of glucose-6-phosphate to fructose-6-phosphate. The protein is Glucose-6-phosphate isomerase of Deinococcus deserti (strain DSM 17065 / CIP 109153 / LMG 22923 / VCD115).